Consider the following 549-residue polypeptide: Arginine-containing cyclodipeptide synthase amaA (549 aa).

The Conserved DDXXE motif motif lies at 445 to 449 (DDRAE).

The protein belongs to the arginine-containing cyclodipeptide synthase family.

The enzyme catalyses L-prolyl-tRNA(Pro) + L-arginyl-tRNA(Arg) = cyclo(L-arginyl-L-prolyl) + tRNA(Pro) + tRNA(Arg) + 2 H(+). Its pathway is secondary metabolite biosynthesis. Arginine-containing cyclodipeptide synthase; part of the cluster that mediates the biosynthesis of a highly modified cyclo-arginine-proline dipeptide (cRP). Within the pathway, amaA acts as the scaffold-generating enzyme and is responsible for formation of the cyclo-Arg-Pro diketopiperazine (cRW) from L-arginyl-tRNA(Arg) + L-prolyl-tRNA(Pro). Additional enzymes from the cluster then further modify the cyclo-Arg-Pro diketopiperazine (cRW) scaffold. This is Arginine-containing cyclodipeptide synthase amaA from Apiospora montagnei (Sphaeria apiospora).